A 125-amino-acid polypeptide reads, in one-letter code: Large ribosomal subunit protein bL12 (125 aa).

Belongs to the bacterial ribosomal protein bL12 family. Homodimer. Part of the ribosomal stalk of the 50S ribosomal subunit. Forms a multimeric L10(L12)X complex, where L10 forms an elongated spine to which 2 to 4 L12 dimers bind in a sequential fashion. Binds GTP-bound translation factors.

Functionally, forms part of the ribosomal stalk which helps the ribosome interact with GTP-bound translation factors. Is thus essential for accurate translation. The chain is Large ribosomal subunit protein bL12 from Francisella tularensis subsp. tularensis (strain SCHU S4 / Schu 4).